A 717-amino-acid chain; its full sequence is F-box only protein 42 (717 aa).

Acidic residues predominate over residues 1–30 (MASSSDSEDDSVMAVDQEETALEGTMEQDE). The interval 1–34 (MASSSDSEDDSVMAVDQEETALEGTMEQDEDPHP) is disordered. In terms of domain architecture, F-box spans 44-93 (NRSMSELPEEVLEYILSFLSPYQEHKTAALVCKQWYRLIKGVAHQCYHGF). 4 Kelch repeats span residues 132–184 (SMYV…VYKD), 186–242 (LVLF…VIGD), 244–293 (MIVF…VIDD), and 295–342 (TLLI…LWCH). The segment at 361–452 (RAPLSPSLNS…NLSPGTVAVG (92 aa)) is disordered. The span at 363–376 (PLSPSLNSRPSPIS) shows a compositional bias: low complexity. A phosphoserine mark is found at Ser-365 and Ser-373. Phosphothreonine is present on Thr-378. Over residues 416-426 (QRQTPSGSREG) the composition is skewed to polar residues. Ser-552 is subject to Phosphoserine. Positions 570 to 595 (GPSASAALSPPLGSSPSSPGSQSLSS) are enriched in low complexity. A disordered region spans residues 570 to 632 (GPSASAALSP…HHPPQSLNVG (63 aa)).

Component of some SCF complex, composed of CUL1, SKP1, RBX1 and FBXO42. Interacts (via the kelch domain) with p53/TP53; interaction is direct.

Functionally, substrate-recognition component of some SCF (SKP1-CUL1-F-box protein)-type E3 ubiquitin ligase complex. Specifically recognizes p53/TP53, promoting its ubiquitination and degradation. This is F-box only protein 42 (Fbxo42) from Mus musculus (Mouse).